A 220-amino-acid polypeptide reads, in one-letter code: Deoxyribose-phosphate aldolase (220 aa).

The Proton donor/acceptor role is filled by Asp89. Lys151 acts as the Schiff-base intermediate with acetaldehyde in catalysis. Lys180 (proton donor/acceptor) is an active-site residue.

Belongs to the DeoC/FbaB aldolase family. DeoC type 1 subfamily.

The protein localises to the cytoplasm. The enzyme catalyses 2-deoxy-D-ribose 5-phosphate = D-glyceraldehyde 3-phosphate + acetaldehyde. It participates in carbohydrate degradation; 2-deoxy-D-ribose 1-phosphate degradation; D-glyceraldehyde 3-phosphate and acetaldehyde from 2-deoxy-alpha-D-ribose 1-phosphate: step 2/2. Catalyzes a reversible aldol reaction between acetaldehyde and D-glyceraldehyde 3-phosphate to generate 2-deoxy-D-ribose 5-phosphate. The sequence is that of Deoxyribose-phosphate aldolase from Streptococcus uberis (strain ATCC BAA-854 / 0140J).